Reading from the N-terminus, the 515-residue chain is RNA-splicing ligase RtcB homolog (515 aa).

Residues D121, C124, H229, H269, and H363 each contribute to the Mn(2+) site. 228-232 (NHYGE) is a binding site for GMP. GMP-binding positions include 363 to 364 (HN), 412 to 415 (GGTM), S419, 438 to 441 (HGSG), and K514. The GMP-histidine intermediate role is filled by H438.

This sequence belongs to the RtcB family. In terms of assembly, catalytic component of the tRNA-splicing ligase complex. The cofactor is Mn(2+).

It carries out the reaction a 3'-end 3'-phospho-ribonucleotide-RNA + a 5'-end dephospho-ribonucleoside-RNA + GTP = a ribonucleotidyl-ribonucleotide-RNA + GMP + diphosphate. The enzyme catalyses a 3'-end 2',3'-cyclophospho-ribonucleotide-RNA + a 5'-end dephospho-ribonucleoside-RNA + GTP + H2O = a ribonucleotidyl-ribonucleotide-RNA + GMP + diphosphate + H(+). Catalytic subunit of the tRNA-splicing ligase complex that acts by directly joining spliced tRNA halves to mature-sized tRNAs by incorporating the precursor-derived splice junction phosphate into the mature tRNA as a canonical 3',5'-phosphodiester. May act as an RNA ligase with broad substrate specificity, and may function toward other RNAs. The sequence is that of RNA-splicing ligase RtcB homolog from Theileria annulata.